A 123-amino-acid polypeptide reads, in one-letter code: Ribonuclease P protein component 1 (123 aa).

Positions 73–93 (PDNGVGTAFKPAGGETRQTTG) are disordered.

It belongs to the eukaryotic/archaeal RNase P protein component 1 family. Consists of a catalytic RNA component and at least 4-5 protein subunits.

The protein resides in the cytoplasm. The enzyme catalyses Endonucleolytic cleavage of RNA, removing 5'-extranucleotides from tRNA precursor.. Its function is as follows. Part of ribonuclease P, a protein complex that generates mature tRNA molecules by cleaving their 5'-ends. The chain is Ribonuclease P protein component 1 from Halobacterium salinarum (strain ATCC 29341 / DSM 671 / R1).